The following is a 210-amino-acid chain: Ribosomal RNA small subunit methyltransferase G (210 aa).

Residues Gly74, Phe79, Ile127–Glu128, and Arg143 contribute to the S-adenosyl-L-methionine site.

It belongs to the methyltransferase superfamily. RNA methyltransferase RsmG family.

Its subcellular location is the cytoplasm. The enzyme catalyses guanosine(527) in 16S rRNA + S-adenosyl-L-methionine = N(7)-methylguanosine(527) in 16S rRNA + S-adenosyl-L-homocysteine. Its function is as follows. Specifically methylates the N7 position of guanine in position 527 of 16S rRNA. This Chelativorans sp. (strain BNC1) protein is Ribosomal RNA small subunit methyltransferase G.